Consider the following 245-residue polypeptide: Cysteine-rich secretory protein 3 (245 aa).

The first 22 residues, 1-22, serve as a signal peptide directing secretion; it reads MALLPVLLFLAAVLLPFFPASG. In terms of domain architecture, SCP spans 42–171; that stretch reads VNKHNDLRRT…TLKYYYVCQY (130 aa). Cystine bridges form between C191–C198, C194–C203, C207–C240, C216–C234, and C225–C238. The region spanning 207–240 is the ShKT domain; it reads CEYEDLVSNCDSLKKIAGCEHELLKENCKTTCQC.

This sequence belongs to the CRISP family. Interacts with A1BG. In terms of tissue distribution, expressed in the salivary gland, in the ampulla and the seminal vesicle.

The protein resides in the secreted. This is Cysteine-rich secretory protein 3 (CRISP3) from Equus caballus (Horse).